A 301-amino-acid chain; its full sequence is Glutamyl-Q tRNA(Asp) synthetase (301 aa).

Residues 8–12 (RFAPS) and Glu-44 each bind L-glutamate. Residues 11–21 (PSPTGPLHFGS) carry the 'HIGH' region motif. Positions 100, 102, 122, and 126 each coordinate Zn(2+). Positions 180 and 198 each coordinate L-glutamate. Residues 236 to 240 (KLSKQ) carry the 'KMSKS' region motif. Residue Lys-239 participates in ATP binding.

Belongs to the class-I aminoacyl-tRNA synthetase family. GluQ subfamily. It depends on Zn(2+) as a cofactor.

Catalyzes the tRNA-independent activation of glutamate in presence of ATP and the subsequent transfer of glutamate onto a tRNA(Asp). Glutamate is transferred on the 2-amino-5-(4,5-dihydroxy-2-cyclopenten-1-yl) moiety of the queuosine in the wobble position of the QUC anticodon. This is Glutamyl-Q tRNA(Asp) synthetase from Dechloromonas aromatica (strain RCB).